The chain runs to 223 residues: uncharacterized protein (223 aa).

The region spanning Arg-5–Leu-116 is the Response regulatory domain. Asp-52 carries the 4-aspartylphosphate modification. The segment at residues Gly-121 to Thr-219 is a DNA-binding region (ompR/PhoB-type).

Post-translationally, phosphorylated by YbdK.

It is found in the cytoplasm. Functionally, member of the two-component regulatory system YbdK/YbdJ. This is an uncharacterized protein from Bacillus subtilis (strain 168).